The sequence spans 402 residues: Transcription regulatory protein OpdE (402 aa).

12 consecutive transmembrane segments (helical) span residues 22-42, 60-80, 86-106, 108-128, 147-167, 170-190, 220-240, 256-276, 296-316, 318-338, 348-368, and 375-395; these read VLAI…PVSL, GIAI…SVAG, TLLL…ALAP, YFVY…FWSM, ALVN…GAWL, LIGW…ALAW, PGVM…FSLF, AHVS…TLLI, ALIA…VVLL, LWGL…ARVF, LFVA…GLLF, and ATFF…ILTA.

To B.subtilis YwfA.

It localises to the cell membrane. Its function is as follows. Regulates the expression of oprD which encodes the imipenem-specific porin. The polypeptide is Transcription regulatory protein OpdE (opdE) (Pseudomonas aeruginosa (strain ATCC 15692 / DSM 22644 / CIP 104116 / JCM 14847 / LMG 12228 / 1C / PRS 101 / PAO1)).